The primary structure comprises 417 residues: Hydroxysteroid dehydrogenase-like protein 2 (417 aa).

Residues 17–23, K42, and D74 each bind NADP(+); that span reads GASRGIG. Y168 (proton acceptor) is an active-site residue. An NADP(+)-binding site is contributed by K172. The region spanning 306–414 is the SCP2 domain; sequence ASPLQETFKA…KLEKILGQMN (109 aa).

It belongs to the short-chain dehydrogenases/reductases (SDR) family.

It localises to the peroxisome. Its subcellular location is the mitochondrion. Has apparently no steroid dehydrogenase activity. Might act as a metabolic regulator that affects systemic adaptation to nutritional cues. This chain is Hydroxysteroid dehydrogenase-like protein 2 (hsdl2), found in Xenopus laevis (African clawed frog).